The chain runs to 246 residues: LexA repressor (246 aa).

The tract at residues 1–34 (MATPQTGKKTPSRRVSELPDGPPDATGLTPRQQR) is disordered. Residues 52-72 (MREIGEAVGLTSSSSVAHQLK) constitute a DNA-binding region (H-T-H motif). Catalysis depends on for autocatalytic cleavage activity residues serine 170 and lysine 207.

Belongs to the peptidase S24 family. In terms of assembly, homodimer.

The enzyme catalyses Hydrolysis of Ala-|-Gly bond in repressor LexA.. Functionally, represses a number of genes involved in the response to DNA damage (SOS response), including recA and lexA. In the presence of single-stranded DNA, RecA interacts with LexA causing an autocatalytic cleavage which disrupts the DNA-binding part of LexA, leading to derepression of the SOS regulon and eventually DNA repair. This Nocardioides sp. (strain ATCC BAA-499 / JS614) protein is LexA repressor.